A 172-amino-acid polypeptide reads, in one-letter code: MASIPCTFQLSARASSASAAAAARRSPRAAARLGWLRPSRLSAVVPASESGRVGPTCFFKFGNKDAEGAGIYGSQGRDDFDRDDVEQYFNYMGMLAVEGTYDKMEALLNQDIHPVDILLMLAASEGDKPKLEELLRAGAKYDVKDVDGRTALDRAADDTREFILGFAATLAA.

The N-terminal 28 residues, 1-28 (MASIPCTFQLSARASSASAAAAARRSPR), are a transit peptide targeting the chloroplast. The stretch at 114 to 146 (PVDILLMLAASEGDKPKLEELLRAGAKYDVKDV) is one ANK repeat.

It is found in the plastid. The protein resides in the chloroplast. Involved in the import of light-harvesting complex proteins (LHCP) and subsequent routing of these proteins to the chloroplast signal recognition particle (SRP) pathway. In Oryza sativa subsp. indica (Rice), this protein is Protein LHCP TRANSLOCATION DEFECT (LTD).